The chain runs to 426 residues: Proline--tRNA ligase (426 aa).

This sequence belongs to the class-II aminoacyl-tRNA synthetase family. ProS type 2 subfamily. In terms of assembly, homodimer.

The protein localises to the cytoplasm. The enzyme catalyses tRNA(Pro) + L-proline + ATP = L-prolyl-tRNA(Pro) + AMP + diphosphate. Functionally, catalyzes the attachment of proline to tRNA(Pro) in a two-step reaction: proline is first activated by ATP to form Pro-AMP and then transferred to the acceptor end of tRNA(Pro). The protein is Proline--tRNA ligase of Anaplasma phagocytophilum (strain HZ).